The following is a 338-amino-acid chain: Lipoate-protein ligase A (338 aa).

The BPL/LPL catalytic domain maps to 29 to 216; sequence SPDQRVLFLW…AFFNYYDEKV (188 aa). ATP is bound by residues Arg-71, 76–79, and Lys-134; that span reads GAVF. Lys-134 is a (R)-lipoate binding site.

Belongs to the LplA family. As to quaternary structure, monomer.

The protein resides in the cytoplasm. It catalyses the reaction L-lysyl-[lipoyl-carrier protein] + (R)-lipoate + ATP = N(6)-[(R)-lipoyl]-L-lysyl-[lipoyl-carrier protein] + AMP + diphosphate + H(+). Its pathway is protein modification; protein lipoylation via exogenous pathway; protein N(6)-(lipoyl)lysine from lipoate: step 1/2. It functions in the pathway protein modification; protein lipoylation via exogenous pathway; protein N(6)-(lipoyl)lysine from lipoate: step 2/2. In terms of biological role, catalyzes both the ATP-dependent activation of exogenously supplied lipoate to lipoyl-AMP and the transfer of the activated lipoyl onto the lipoyl domains of lipoate-dependent enzymes. The sequence is that of Lipoate-protein ligase A from Yersinia enterocolitica serotype O:8 / biotype 1B (strain NCTC 13174 / 8081).